Reading from the N-terminus, the 253-residue chain is Ubiquinone/menaquinone biosynthesis C-methyltransferase UbiE (253 aa).

S-adenosyl-L-methionine is bound by residues Thr76, Asp97, and 125–126 (NA).

The protein belongs to the class I-like SAM-binding methyltransferase superfamily. MenG/UbiE family.

The enzyme catalyses a 2-demethylmenaquinol + S-adenosyl-L-methionine = a menaquinol + S-adenosyl-L-homocysteine + H(+). It catalyses the reaction a 2-methoxy-6-(all-trans-polyprenyl)benzene-1,4-diol + S-adenosyl-L-methionine = a 5-methoxy-2-methyl-3-(all-trans-polyprenyl)benzene-1,4-diol + S-adenosyl-L-homocysteine + H(+). Its pathway is quinol/quinone metabolism; menaquinone biosynthesis; menaquinol from 1,4-dihydroxy-2-naphthoate: step 2/2. It functions in the pathway cofactor biosynthesis; ubiquinone biosynthesis. Methyltransferase required for the conversion of demethylmenaquinol (DMKH2) to menaquinol (MKH2) and the conversion of 2-polyprenyl-6-methoxy-1,4-benzoquinol (DDMQH2) to 2-polyprenyl-3-methyl-6-methoxy-1,4-benzoquinol (DMQH2). The protein is Ubiquinone/menaquinone biosynthesis C-methyltransferase UbiE of Stenotrophomonas maltophilia (strain R551-3).